The following is a 49-amino-acid chain: TSCNAATGRSPGCFCNNDNNCRDTCCPRSDTEKKCTGGPDPCPPRQWPD.

Positions 28-49 (RSDTEKKCTGGPDPCPPRQWPD) are disordered. Residues 40 to 49 (DPCPPRQWPD) show a composition bias toward pro residues.

Contains 4 disulfide bonds. As to expression, expressed by the venom duct.

It is found in the secreted. In terms of biological role, acts as a neurotoxin by inhibiting an ion channel. The sequence is that of Turripeptide OL47 from Iotyrris olangoensis (Sea snail).